We begin with the raw amino-acid sequence, 1107 residues long: Protein translocase subunit SecA (1107 aa).

Residues glutamine 169, 187 to 191, and aspartate 688 contribute to the ATP site; that span reads GEGKT. Residues 1036–1066 show a composition bias toward basic and acidic residues; the sequence is RHAAEQRTDMSKYRTQKDDIEAQQKAQRDAA. A disordered region spans residues 1036–1107; the sequence is RHAAEQRTDM…KFKQCHGRNL (72 aa). 4 residues coordinate Zn(2+): cysteine 1091, cysteine 1093, cysteine 1102, and histidine 1103. The segment covering 1097–1107 has biased composition (basic residues); that stretch reads KKFKQCHGRNL.

It belongs to the SecA family. Monomer and homodimer. Part of the essential Sec protein translocation apparatus which comprises SecA, SecYEG and auxiliary proteins SecDF. Other proteins may also be involved. The cofactor is Zn(2+).

Its subcellular location is the cell inner membrane. The protein resides in the cytoplasm. It carries out the reaction ATP + H2O + cellular proteinSide 1 = ADP + phosphate + cellular proteinSide 2.. In terms of biological role, part of the Sec protein translocase complex. Interacts with the SecYEG preprotein conducting channel. Has a central role in coupling the hydrolysis of ATP to the transfer of proteins into and across the cell membrane, serving as an ATP-driven molecular motor driving the stepwise translocation of polypeptide chains across the membrane. This is Protein translocase subunit SecA from Porphyromonas gingivalis (strain ATCC BAA-308 / W83).